The primary structure comprises 31 residues: MFTVISYLSLLFISFLFALTLFIVLNKIELI.

Residues 4-24 (VISYLSLLFISFLFALTLFIV) form a helical membrane-spanning segment.

Belongs to the PetL family. In terms of assembly, the 4 large subunits of the cytochrome b6-f complex are cytochrome b6, subunit IV (17 kDa polypeptide, PetD), cytochrome f and the Rieske protein, while the 4 small subunits are PetG, PetL, PetM and PetN. The complex functions as a dimer.

Its subcellular location is the plastid. It is found in the chloroplast thylakoid membrane. In terms of biological role, component of the cytochrome b6-f complex, which mediates electron transfer between photosystem II (PSII) and photosystem I (PSI), cyclic electron flow around PSI, and state transitions. PetL is important for photoautotrophic growth as well as for electron transfer efficiency and stability of the cytochrome b6-f complex. The chain is Cytochrome b6-f complex subunit 6 from Chara vulgaris (Common stonewort).